The primary structure comprises 124 residues: Putative iron-sulfur cluster insertion protein ErpA (124 aa).

Residues cysteine 49, cysteine 113, and cysteine 115 each coordinate iron-sulfur cluster.

Belongs to the HesB/IscA family. Homodimer. Iron-sulfur cluster is required as a cofactor.

In terms of biological role, required for insertion of 4Fe-4S clusters. The sequence is that of Putative iron-sulfur cluster insertion protein ErpA from Acidovorax sp. (strain JS42).